Reading from the N-terminus, the 86-residue chain is Large ribosomal subunit protein uL24 (86 aa).

This sequence belongs to the universal ribosomal protein uL24 family. As to quaternary structure, part of the 50S ribosomal subunit.

In terms of biological role, one of two assembly initiator proteins, it binds directly to the 5'-end of the 23S rRNA, where it nucleates assembly of the 50S subunit. Its function is as follows. One of the proteins that surrounds the polypeptide exit tunnel on the outside of the subunit. The protein is Large ribosomal subunit protein uL24 of Bdellovibrio bacteriovorus (strain ATCC 15356 / DSM 50701 / NCIMB 9529 / HD100).